The following is a 365-amino-acid chain: Peptide chain release factor 2 (365 aa).

An N5-methylglutamine modification is found at glutamine 252.

The protein belongs to the prokaryotic/mitochondrial release factor family. Post-translationally, methylated by PrmC. Methylation increases the termination efficiency of RF2.

It is found in the cytoplasm. Its function is as follows. Peptide chain release factor 2 directs the termination of translation in response to the peptide chain termination codons UGA and UAA. The sequence is that of Peptide chain release factor 2 from Yersinia pseudotuberculosis serotype O:1b (strain IP 31758).